A 498-amino-acid chain; its full sequence is ATP synthase subunit beta, chloroplastic (498 aa).

Position 172 to 179 (172 to 179) interacts with ATP; that stretch reads GGAGVGKT.

Belongs to the ATPase alpha/beta chains family. As to quaternary structure, F-type ATPases have 2 components, CF(1) - the catalytic core - and CF(0) - the membrane proton channel. CF(1) has five subunits: alpha(3), beta(3), gamma(1), delta(1), epsilon(1). CF(0) has four main subunits: a(1), b(1), b'(1) and c(9-12).

It localises to the plastid. Its subcellular location is the chloroplast thylakoid membrane. The catalysed reaction is ATP + H2O + 4 H(+)(in) = ADP + phosphate + 5 H(+)(out). Its function is as follows. Produces ATP from ADP in the presence of a proton gradient across the membrane. The catalytic sites are hosted primarily by the beta subunits. The sequence is that of ATP synthase subunit beta, chloroplastic from Sorghum bicolor (Sorghum).